A 55-amino-acid chain; its full sequence is Protein CADMIUM TOLERANCE 1 (55 aa).

A helical membrane pass occupies residues 24–40 (GCLYACIFTALCCFCCY).

The protein belongs to the CYSTM1 family. In terms of tissue distribution, expressed in roots and shoots.

It is found in the cell membrane. It localises to the secreted. The protein localises to the cell wall. Functionally, confers resistance to heavy metal ions (e.g. cadmium (CdCl(2)) and copper (CuCl(2))) by chelating them at the plasma membrane of root cells, thus stopping their entry and reducing their accumulation. Binds to aluminium (Al). This is Protein CADMIUM TOLERANCE 1 from Oryza sativa subsp. japonica (Rice).